Consider the following 598-residue polypeptide: MKNIRNFSIIAHIDHGKSTLSDRLINTCGGLSDREMESQVLDSMDIERERGITIKAQSVTLDYHAKDGETYQLNFIDTPGHVDFAYEVSRSLAACEGALLVVDAGQGVEAQTLANCYTAMEMNLEVVPILNKIDLPAADPDRVAKEIEDIIGIDAADAVRCSAKTGVGIDLVLEEIVRCIPPPVGDLTGPLQALIIDSWFDNYQGVVSLVRVMHGQIKVGDRMKVMSTGQVNPVAKVGYFTPKQKETGILKAGEVGYVIAGIKDILGAPVGDTLTISGHEAAKALPGFKRAKPQVYAGLFPVSSDDYENFRDALAKLSINDASLFYEPENSSALGFGFRCGFLGLLHMEIVQERLEREYDLNLITTAPTVVYEVETTRGEVLHIDSPAKFPAMNDIEEIREPIAECNILVPQEYLGNVITLCVQKRGMQTKMVYHGKQVALTYHIPMGEVVMDFFDRLKSTSRGYASLEYNFVKFEAADMVRVDVLINSERVDALALITHRANSESYGRDLVDKMKDLIPRQMFNIALQAAIGSKIIARSTVKQLTKNVLAKCYGGDISRKKKLLKKQKEGKKRMKSVGNVDIPQEAFLAVLHIGKDK.

A tr-type G domain is found at 2-184; the sequence is KNIRNFSIIA…EIVRCIPPPV (183 aa). GTP-binding positions include 14–19 and 131–134; these read DHGKST and NKID.

The protein belongs to the TRAFAC class translation factor GTPase superfamily. Classic translation factor GTPase family. LepA subfamily.

The protein resides in the cell inner membrane. The enzyme catalyses GTP + H2O = GDP + phosphate + H(+). Its function is as follows. Required for accurate and efficient protein synthesis under certain stress conditions. May act as a fidelity factor of the translation reaction, by catalyzing a one-codon backward translocation of tRNAs on improperly translocated ribosomes. Back-translocation proceeds from a post-translocation (POST) complex to a pre-translocation (PRE) complex, thus giving elongation factor G a second chance to translocate the tRNAs correctly. Binds to ribosomes in a GTP-dependent manner. The protein is Elongation factor 4 of Psychromonas ingrahamii (strain DSM 17664 / CCUG 51855 / 37).